The primary structure comprises 168 residues: Small ribosomal subunit protein uS5 (168 aa).

Positions Tyr11–Ile74 constitute an S5 DRBM domain.

This sequence belongs to the universal ribosomal protein uS5 family. As to quaternary structure, part of the 30S ribosomal subunit. Contacts proteins S4 and S8.

With S4 and S12 plays an important role in translational accuracy. Functionally, located at the back of the 30S subunit body where it stabilizes the conformation of the head with respect to the body. The protein is Small ribosomal subunit protein uS5 of Leptospira interrogans serogroup Icterohaemorrhagiae serovar copenhageni (strain Fiocruz L1-130).